Here is a 129-residue protein sequence, read N- to C-terminus: Transcription antitermination protein NusB (129 aa).

The protein belongs to the NusB family.

Its function is as follows. Involved in transcription antitermination. Required for transcription of ribosomal RNA (rRNA) genes. Binds specifically to the boxA antiterminator sequence of the ribosomal RNA (rrn) operons. This Staphylococcus aureus (strain MRSA252) protein is Transcription antitermination protein NusB.